Consider the following 499-residue polypeptide: UDP-N-acetylmuramoyl-L-alanyl-D-glutamate--2,6-diaminopimelate ligase (499 aa).

The UDP-N-acetyl-alpha-D-muramoyl-L-alanyl-D-glutamate site is built by leucine 30 and serine 32. An ATP-binding site is contributed by 122–128 (GTNGKTT). UDP-N-acetyl-alpha-D-muramoyl-L-alanyl-D-glutamate-binding positions include 164-165 (TT), serine 191, glutamine 197, and arginine 199. The residue at position 231 (lysine 231) is an N6-carboxylysine. Meso-2,6-diaminopimelate contacts are provided by residues arginine 397, 421 to 424 (DNPR), glycine 472, and glutamate 476. The short motif at 421–424 (DNPR) is the Meso-diaminopimelate recognition motif element.

This sequence belongs to the MurCDEF family. MurE subfamily. Requires Mg(2+) as cofactor. Carboxylation is probably crucial for Mg(2+) binding and, consequently, for the gamma-phosphate positioning of ATP.

The protein localises to the cytoplasm. It carries out the reaction UDP-N-acetyl-alpha-D-muramoyl-L-alanyl-D-glutamate + meso-2,6-diaminopimelate + ATP = UDP-N-acetyl-alpha-D-muramoyl-L-alanyl-gamma-D-glutamyl-meso-2,6-diaminopimelate + ADP + phosphate + H(+). It participates in cell wall biogenesis; peptidoglycan biosynthesis. Catalyzes the addition of meso-diaminopimelic acid to the nucleotide precursor UDP-N-acetylmuramoyl-L-alanyl-D-glutamate (UMAG) in the biosynthesis of bacterial cell-wall peptidoglycan. The sequence is that of UDP-N-acetylmuramoyl-L-alanyl-D-glutamate--2,6-diaminopimelate ligase from Blochmanniella floridana.